A 501-amino-acid polypeptide reads, in one-letter code: Protein translocase subunit SecD (501 aa).

A run of 6 helical transmembrane segments spans residues 9–29 (NLWL…YAVV), 339–359 (AIEQ…VVLI), 371–391 (ISIF…GATL), 394–414 (PGIA…VLIF), 447–467 (VTLL…VKGF), and 470–490 (TLAL…KVFL).

This sequence belongs to the SecD/SecF family. SecD subfamily. Forms a complex with SecF. Part of the essential Sec protein translocation apparatus which comprises SecA, SecYEG and auxiliary proteins SecDF. Other proteins may also be involved.

It localises to the cell inner membrane. Its function is as follows. Part of the Sec protein translocase complex. Interacts with the SecYEG preprotein conducting channel. SecDF uses the proton motive force (PMF) to complete protein translocation after the ATP-dependent function of SecA. This is Protein translocase subunit SecD from Aquifex aeolicus (strain VF5).